The primary structure comprises 97 residues: Aspartyl/glutamyl-tRNA(Asn/Gln) amidotransferase subunit C (97 aa).

The protein belongs to the GatC family. As to quaternary structure, heterotrimer of A, B and C subunits.

It catalyses the reaction L-glutamyl-tRNA(Gln) + L-glutamine + ATP + H2O = L-glutaminyl-tRNA(Gln) + L-glutamate + ADP + phosphate + H(+). It carries out the reaction L-aspartyl-tRNA(Asn) + L-glutamine + ATP + H2O = L-asparaginyl-tRNA(Asn) + L-glutamate + ADP + phosphate + 2 H(+). Allows the formation of correctly charged Asn-tRNA(Asn) or Gln-tRNA(Gln) through the transamidation of misacylated Asp-tRNA(Asn) or Glu-tRNA(Gln) in organisms which lack either or both of asparaginyl-tRNA or glutaminyl-tRNA synthetases. The reaction takes place in the presence of glutamine and ATP through an activated phospho-Asp-tRNA(Asn) or phospho-Glu-tRNA(Gln). This Anaeromyxobacter dehalogenans (strain 2CP-C) protein is Aspartyl/glutamyl-tRNA(Asn/Gln) amidotransferase subunit C.